Consider the following 387-residue polypeptide: Probable protein phosphatase 2C 25 (387 aa).

A PPM-type phosphatase domain is found at 52 to 351; the sequence is EFSFAVVQAN…DDITVVVVYI (300 aa). Positions 83, 84, 283, and 342 each coordinate Mn(2+).

Belongs to the PP2C family. Requires Mg(2+) as cofactor. The cofactor is Mn(2+).

The enzyme catalyses O-phospho-L-seryl-[protein] + H2O = L-seryl-[protein] + phosphate. The catalysed reaction is O-phospho-L-threonyl-[protein] + H2O = L-threonyl-[protein] + phosphate. This is Probable protein phosphatase 2C 25 from Oryza sativa subsp. japonica (Rice).